The primary structure comprises 200 residues: Insulin, isoform 2 (200 aa).

A disordered region spans residues 148-200 (EVDSSPQPQGSESLPAQPPAQPAPQPEPQQAREPSPEVSCCGLWPRRPQRSQN). The span at 163 to 174 (AQPPAQPAPQPE) shows a compositional bias: pro residues. The segment covering 175–184 (PQQAREPSPE) has biased composition (low complexity).

Expressed in pancreas, eye and, to a lower extent, in limb.

The protein is Insulin, isoform 2 (INS-IGF2) of Homo sapiens (Human).